We begin with the raw amino-acid sequence, 1201 residues long: ATPase with bromodomain protein abo2 (1201 aa).

Disordered regions lie at residues 1–223 and 305–324; these read MRRR…MRGP and CDSDETSELSSTSSEQTSDV. Residues 13–24 show a composition bias toward acidic residues; it reads DDNEDNEEDDDY. The span at 29–38 shows a compositional bias: basic and acidic residues; it reads HSEKSEDHSN. Polar residues predominate over residues 66 to 89; that stretch reads FSSLQKHLNTETPSFSVSIENPSK. A compositionally biased stretch (acidic residues) spans 129-146; it reads TDNNEDESTTFKDEEDDL. The segment covering 212-221 has biased composition (basic residues); it reads RRGRRKRKMR. Low complexity predominate over residues 312–323; that stretch reads ELSSTSSEQTSD. An ATP-binding site is contributed by 413-420; it reads GPPGTGKT. The region spanning 897–1026 is the Bromo domain; it reads KIKNKIQVKL…AHAELNVDEL (130 aa).

Belongs to the AAA ATPase family.

It is found in the nucleus. The catalysed reaction is ATP + H2O = ADP + phosphate + H(+). Its function is as follows. Probable ATPase which may play a role in nucleosome organization. The sequence is that of ATPase with bromodomain protein abo2 from Schizosaccharomyces pombe (strain 972 / ATCC 24843) (Fission yeast).